Reading from the N-terminus, the 271-residue chain is Tryptophan synthase alpha chain (271 aa).

Residues Glu49 and Asp60 each act as proton acceptor in the active site.

The protein belongs to the TrpA family. In terms of assembly, tetramer of two alpha and two beta chains.

The catalysed reaction is (1S,2R)-1-C-(indol-3-yl)glycerol 3-phosphate + L-serine = D-glyceraldehyde 3-phosphate + L-tryptophan + H2O. The protein operates within amino-acid biosynthesis; L-tryptophan biosynthesis; L-tryptophan from chorismate: step 5/5. Its function is as follows. The alpha subunit is responsible for the aldol cleavage of indoleglycerol phosphate to indole and glyceraldehyde 3-phosphate. In Rhizorhabdus wittichii (strain DSM 6014 / CCUG 31198 / JCM 15750 / NBRC 105917 / EY 4224 / RW1) (Sphingomonas wittichii), this protein is Tryptophan synthase alpha chain.